The sequence spans 157 residues: Tuberoinfundibular peptide of 39 residues (157 aa).

The first 25 residues, 1–25 (MALSLPPRPALLFLVLMSVTLMASA), serve as a signal peptide directing secretion. A propeptide spanning residues 26-116 (FPQPQLRPLQ…DWPSRVGHQQ (91 aa)) is cleaved from the precursor.

This sequence belongs to the parathyroid hormone family.

It is found in the secreted. Functionally, plays a role as a potent and selective agonist of pth2r resulting in adenyl cyclase activation and intracellular calcium level elevation. The sequence is that of Tuberoinfundibular peptide of 39 residues from Danio rerio (Zebrafish).